Reading from the N-terminus, the 216-residue chain is Somatotropin (216 aa).

A signal peptide spans 1–26 (MAAGSWTAGLLAFALLCLPWPQEASA). A Zn(2+)-binding site is contributed by His45. Cys78 and Cys189 are disulfide-bonded. At Ser131 the chain carries Phosphoserine. Glu198 provides a ligand contact to Zn(2+). Cys206 and Cys214 are disulfide-bonded.

This sequence belongs to the somatotropin/prolactin family.

It localises to the secreted. Plays an important role in growth control. Its major role in stimulating body growth is to stimulate the liver and other tissues to secrete IGF1. It stimulates both the differentiation and proliferation of myoblasts. It also stimulates amino acid uptake and protein synthesis in muscle and other tissues. The polypeptide is Somatotropin (GH1) (Oryctolagus cuniculus (Rabbit)).